The chain runs to 232 residues: Large ribosomal subunit protein uL1 (232 aa).

Belongs to the universal ribosomal protein uL1 family. In terms of assembly, part of the 50S ribosomal subunit.

Binds directly to 23S rRNA. The L1 stalk is quite mobile in the ribosome, and is involved in E site tRNA release. In terms of biological role, protein L1 is also a translational repressor protein, it controls the translation of the L11 operon by binding to its mRNA. This is Large ribosomal subunit protein uL1 from Phocaeicola vulgatus (strain ATCC 8482 / DSM 1447 / JCM 5826 / CCUG 4940 / NBRC 14291 / NCTC 11154) (Bacteroides vulgatus).